The following is a 382-amino-acid chain: Homoserine O-acetyltransferase (382 aa).

One can recognise an AB hydrolase-1 domain in the interval 50–360 (NAVLICHALT…DKGHDAFLLD (311 aa)). Residue S155 is the Nucleophile of the active site. R225 serves as a coordination point for substrate. Residues D321 and H354 contribute to the active site. Residue D355 participates in substrate binding.

Belongs to the AB hydrolase superfamily. MetX family. Homodimer.

It localises to the cytoplasm. The catalysed reaction is L-homoserine + acetyl-CoA = O-acetyl-L-homoserine + CoA. Its pathway is amino-acid biosynthesis; L-methionine biosynthesis via de novo pathway; O-acetyl-L-homoserine from L-homoserine: step 1/1. Its function is as follows. Transfers an acetyl group from acetyl-CoA to L-homoserine, forming acetyl-L-homoserine. The chain is Homoserine O-acetyltransferase from Caulobacter vibrioides (strain ATCC 19089 / CIP 103742 / CB 15) (Caulobacter crescentus).